The sequence spans 501 residues: Type II methyltransferase M.BsuBI (501 aa).

It belongs to the N(4)/N(6)-methyltransferase family.

It carries out the reaction a 2'-deoxyadenosine in DNA + S-adenosyl-L-methionine = an N(6)-methyl-2'-deoxyadenosine in DNA + S-adenosyl-L-homocysteine + H(+). In terms of biological role, a beta subtype methylase that recognizes the double-stranded sequence 5'-CTGCAG-3', methylates A-5 on both strands, and protects the DNA from cleavage by the BsuBI endonuclease. This chain is Type II methyltransferase M.BsuBI (hsdBM), found in Bacillus subtilis.